The sequence spans 366 residues: Dof zinc finger protein DOF1.3 (366 aa).

The interval D22–K103 is disordered. Low complexity-rich tracts occupy residues S25–L45 and T56–N69. 2 stretches are compositionally biased toward basic and acidic residues: residues E70–S83 and E91–K103. A Dof-type zinc finger spans residues L105–G159. Zn(2+) is bound by residues C107, C110, C132, and C135.

It localises to the nucleus. In terms of biological role, transcription factor that binds specifically to a 5'-AA[AG]G-3' consensus core sequence. The chain is Dof zinc finger protein DOF1.3 (DOF1.3) from Arabidopsis thaliana (Mouse-ear cress).